Consider the following 157-residue polypeptide: 6,7-dimethyl-8-ribityllumazine synthase (157 aa).

Residues F24, 56–58 (SFE), and 79–81 (VLI) contribute to the 5-amino-6-(D-ribitylamino)uracil site. Residue 84 to 85 (ET) coordinates (2S)-2-hydroxy-3-oxobutyl phosphate. H87 serves as the catalytic Proton donor. F112 is a 5-amino-6-(D-ribitylamino)uracil binding site. (2S)-2-hydroxy-3-oxobutyl phosphate is bound at residue R126.

This sequence belongs to the DMRL synthase family.

It carries out the reaction (2S)-2-hydroxy-3-oxobutyl phosphate + 5-amino-6-(D-ribitylamino)uracil = 6,7-dimethyl-8-(1-D-ribityl)lumazine + phosphate + 2 H2O + H(+). It participates in cofactor biosynthesis; riboflavin biosynthesis; riboflavin from 2-hydroxy-3-oxobutyl phosphate and 5-amino-6-(D-ribitylamino)uracil: step 1/2. Catalyzes the formation of 6,7-dimethyl-8-ribityllumazine by condensation of 5-amino-6-(D-ribitylamino)uracil with 3,4-dihydroxy-2-butanone 4-phosphate. This is the penultimate step in the biosynthesis of riboflavin. This chain is 6,7-dimethyl-8-ribityllumazine synthase, found in Pyrococcus furiosus (strain ATCC 43587 / DSM 3638 / JCM 8422 / Vc1).